Consider the following 457-residue polypeptide: Probable ECA polymerase (457 aa).

The next 11 membrane-spanning stretches (helical) occupy residues 3–23, 41–61, 65–85, 118–138, 154–174, 181–201, 206–226, 227–247, 340–360, 377–397, and 408–428; these read LLQF…ILTL, MLFL…VFGF, VVPA…YAIY, IMAL…GFLL, GVAL…VYFL, WLLF…IVGG, IIIA…ITLW, MLAL…LKRY, LVVM…GLII, YKAA…IVLA, and VVFF…LYWL.

It belongs to the WzyE family. Probably part of a complex composed of WzxE, WzyE and WzzE.

The protein localises to the cell inner membrane. It participates in bacterial outer membrane biogenesis; enterobacterial common antigen biosynthesis. Its function is as follows. Probably involved in the polymerization of enterobacterial common antigen (ECA) trisaccharide repeat units. This chain is Probable ECA polymerase, found in Erwinia tasmaniensis (strain DSM 17950 / CFBP 7177 / CIP 109463 / NCPPB 4357 / Et1/99).